A 106-amino-acid chain; its full sequence is Nucleoid-associated protein Smlt1015 (106 aa).

A disordered region spans residues 81 to 106; sequence IDAESKSKMGSATAGMQLPPGMKLPF.

This sequence belongs to the YbaB/EbfC family. In terms of assembly, homodimer.

It is found in the cytoplasm. Its subcellular location is the nucleoid. In terms of biological role, binds to DNA and alters its conformation. May be involved in regulation of gene expression, nucleoid organization and DNA protection. In Stenotrophomonas maltophilia (strain K279a), this protein is Nucleoid-associated protein Smlt1015.